Consider the following 48-residue polypeptide: Sperm protamine R3 isoform 1 (48 aa).

Residues 1 to 29 (ARRRHSMKKKRKSVRRRKTRKNQRKRKNS) are compositionally biased toward basic residues. Positions 1-48 (ARRRHSMKKKRKSVRRRKTRKNQRKRKNSLGRSFKQHGFLKQPPRFRP) are disordered.

Testis.

The protein localises to the nucleus. Its subcellular location is the chromosome. Its function is as follows. Protamines substitute for histones in the chromatin of sperm during the haploid phase of spermatogenesis. They compact sperm DNA into a highly condensed, stable and inactive complex. The chain is Sperm protamine R3 isoform 1 from Hydrolagus colliei (Spotted ratfish).